Reading from the N-terminus, the 245-residue chain is Zinc import ATP-binding protein ZnuC (245 aa).

In terms of domain architecture, ABC transporter spans 27–244; that stretch reads LTADSLTLFY…AKFLSVFPNN (218 aa). Position 59–66 (59–66) interacts with ATP; sequence GPNGGGKT.

It belongs to the ABC transporter superfamily. Zinc importer (TC 3.A.1.15.5) family. In terms of assembly, the complex is composed of two ATP-binding proteins (ZnuC), two transmembrane proteins (ZnuB) and a solute-binding protein (ZnuA).

The protein resides in the cell inner membrane. The catalysed reaction is Zn(2+)(out) + ATP(in) + H2O(in) = Zn(2+)(in) + ADP(in) + phosphate(in) + H(+)(in). In terms of biological role, part of the ABC transporter complex ZnuABC involved in zinc import. Responsible for energy coupling to the transport system. The chain is Zinc import ATP-binding protein ZnuC from Anaplasma marginale (strain St. Maries).